The chain runs to 663 residues: Telomere length regulator taz1 (663 aa).

Residues 15–72 (ENEGDQQFDKEVVQNSDSNIETGQISDSLTKAVEERAETESSSNLSNFTTSESESSKP) are disordered. Composition is skewed to polar residues over residues 27–43 (VQNS…SDSL) and 54–67 (ESSS…TSES). Position 332 is a phosphoserine (Ser-332). Disordered regions lie at residues 389–412 (GSTA…TFSE) and 471–554 (RAKS…PYEG). Basic and acidic residues-rich tracts occupy residues 489 to 498 (KRGDNLRREA) and 512 to 524 (PPVR…ESRS). The 57-residue stretch at 556–612 (RTRRKWTDEEENELYEMISQHGCCWSKIIHIQKLENGPLKTFGPTQIKDKARLIKAR) folds into the Myb-like domain.

In terms of assembly, interacts with taf1 via the Myb domain, and ccq1.

It localises to the cytoplasm. It is found in the nucleus. The protein resides in the chromosome. The protein localises to the telomere. In terms of biological role, regulates telomere length and function. Required for the repression of telomere-adjacent gene expression and for normal meiosis or sporulation. It may be a negative regulator of the telomere-replicating enzyme, telomerase, or may protect against activation of telomerase-independent pathways of telomere elongation. It may be involved in the interactions between chromosomes and spindle proteins, disruption of these interactions would lead to defective meiosis. This chain is Telomere length regulator taz1 (taz1), found in Schizosaccharomyces pombe (strain 972 / ATCC 24843) (Fission yeast).